A 284-amino-acid chain; its full sequence is MEMO1 family protein YG5714_2180 (284 aa).

Belongs to the MEMO1 family.

The sequence is that of MEMO1 family protein YG5714_2180 from Saccharolobus islandicus (strain Y.G.57.14 / Yellowstone #1) (Sulfolobus islandicus).